Consider the following 157-residue polypeptide: Small ribosomal subunit protein uS7 (157 aa).

The protein belongs to the universal ribosomal protein uS7 family. Part of the 30S ribosomal subunit. Contacts proteins S9 and S11.

Its function is as follows. One of the primary rRNA binding proteins, it binds directly to 16S rRNA where it nucleates assembly of the head domain of the 30S subunit. Is located at the subunit interface close to the decoding center, probably blocks exit of the E-site tRNA. This chain is Small ribosomal subunit protein uS7, found in Acidovorax ebreus (strain TPSY) (Diaphorobacter sp. (strain TPSY)).